The chain runs to 253 residues: Adapter protein MecA (253 aa).

Belongs to the MecA family. As to quaternary structure, homodimer.

Functionally, enables the recognition and targeting of unfolded and aggregated proteins to the ClpC protease or to other proteins involved in proteolysis. This Streptococcus pyogenes serotype M6 (strain ATCC BAA-946 / MGAS10394) protein is Adapter protein MecA.